A 404-amino-acid chain; its full sequence is Exodeoxyribonuclease 7 large subunit (404 aa).

The protein belongs to the XseA family. Heterooligomer composed of large and small subunits.

Its subcellular location is the cytoplasm. The catalysed reaction is Exonucleolytic cleavage in either 5'- to 3'- or 3'- to 5'-direction to yield nucleoside 5'-phosphates.. Bidirectionally degrades single-stranded DNA into large acid-insoluble oligonucleotides, which are then degraded further into small acid-soluble oligonucleotides. This is Exodeoxyribonuclease 7 large subunit from Mesoplasma florum (strain ATCC 33453 / NBRC 100688 / NCTC 11704 / L1) (Acholeplasma florum).